A 577-amino-acid polypeptide reads, in one-letter code: Heavy metal-associated isoprenylated plant protein 34 (577 aa).

The region spanning 9–72 is the HMA domain; it reads LQTCVLKVNV…KLSKSGKHAE (64 aa). A metal cation contacts are provided by C20 and C23. A compositionally biased stretch (gly residues) spans 77 to 87; that stretch reads GGGGGGGGGKG. 2 disordered regions span residues 77–136 and 150–451; these read GGGG…QPMQ and AAHG…GPGG. Low complexity predominate over residues 97-106; sequence NLNMGGNNKP. Residues 118–129 are compositionally biased toward gly residues; sequence KAGGGGGGGQNH. A compositionally biased stretch (basic and acidic residues) spans 168-177; it reads KDQKKSVKFA. A compositionally biased stretch (acidic residues) spans 178-213; it reads DDEDDEFSEDDYDDEDFSEDDYDDDEFDDDEDDDDE. Positions 227–244 are enriched in low complexity; it reads HMPPNKMMMPNKMMPQMG. 2 stretches are compositionally biased toward gly residues: residues 245 to 254 and 266 to 281; these read GHHGNGGGPK and FKGGGGGGKKGGGGGF. Basic and acidic residues-rich tracts occupy residues 294 to 326 and 344 to 358; these read KNGKDGKKGKGGEKGKKEGKENKGGGKTGKTDA and NGDEKKSAGKKDGHG. 2 stretches are compositionally biased toward gly residues: residues 379–392 and 420–451; these read KKGGGGTKGGGHGG and GIGGGPMGPGGPMGPGGPMGQGGPMGMMGPGG. C574 carries the post-translational modification Cysteine methyl ester. Residue C574 is the site of S-farnesyl cysteine attachment. A propeptide spans 575–577 (removed in mature form); it reads SIM.

It belongs to the HIPP family.

Its function is as follows. Heavy-metal-binding protein. In Arabidopsis thaliana (Mouse-ear cress), this protein is Heavy metal-associated isoprenylated plant protein 34.